Reading from the N-terminus, the 227-residue chain is uncharacterized protein (227 aa).

A coiled-coil region spans residues 52-100; sequence NKRAKLYRERNKAKLKEKQHKWYHKGGGKEHKKLYDKINLEKSNMRDKN.

Belongs to the mimivirus L246/L426 family.

This is an uncharacterized protein from Acanthamoeba polyphaga mimivirus (APMV).